A 31-amino-acid polypeptide reads, in one-letter code: Photosystem II reaction center protein T (31 aa).

The helical transmembrane segment at 3–23 (AFSYTLLMALAAVTLFFAVAF) threads the bilayer.

It belongs to the PsbT family. As to quaternary structure, PSII is composed of 1 copy each of membrane proteins PsbA, PsbB, PsbC, PsbD, PsbE, PsbF, PsbH, PsbI, PsbJ, PsbK, PsbL, PsbM, PsbT, PsbX, PsbY, Psb30/Ycf12, peripheral proteins PsbO, CyanoQ (PsbQ), PsbU, PsbV and a large number of cofactors. It forms dimeric complexes.

Its subcellular location is the cellular thylakoid membrane. Functionally, found at the monomer-monomer interface of the photosystem II (PS II) dimer, plays a role in assembly and dimerization of PSII. PSII is a light-driven water plastoquinone oxidoreductase, using light energy to abstract electrons from H(2)O, generating a proton gradient subsequently used for ATP formation. In Prochlorococcus marinus (strain MIT 9211), this protein is Photosystem II reaction center protein T.